The following is a 447-amino-acid chain: Methyl-coenzyme M reductase II subunit beta (447 aa).

Position 368 (tyrosine 368) interacts with coenzyme M. Position 370 (glycine 370) interacts with coenzyme B.

Belongs to the methyl-coenzyme M reductase beta subunit family. MCR is a hexamer of two alpha, two beta, and two gamma chains, forming a dimer of heterotrimers. The cofactor is coenzyme F430.

It catalyses the reaction coenzyme B + methyl-coenzyme M = methane + coenzyme M-coenzyme B heterodisulfide. It participates in one-carbon metabolism; methyl-coenzyme M reduction; methane from methyl-coenzyme M: step 1/1. Component of the methyl-coenzyme M reductase (MCR) I that catalyzes the reductive cleavage of methyl-coenzyme M (CoM-S-CH3 or 2-(methylthio)ethanesulfonate) using coenzyme B (CoB or 7-mercaptoheptanoylthreonine phosphate) as reductant which results in the production of methane and the mixed heterodisulfide of CoB and CoM (CoM-S-S-CoB). This is the final step in methanogenesis. This Methanocaldococcus jannaschii (strain ATCC 43067 / DSM 2661 / JAL-1 / JCM 10045 / NBRC 100440) (Methanococcus jannaschii) protein is Methyl-coenzyme M reductase II subunit beta (mrtB).